A 1033-amino-acid polypeptide reads, in one-letter code: SIT4-associating protein SAP190 (1033 aa).

4 disordered regions span residues Asp-32–Ser-82, Pro-147–Thr-213, Phe-768–Gly-813, and Glu-828–Phe-1033. Residues Ile-158–Asp-170 show a composition bias toward basic and acidic residues. Residues Ala-171–Asn-182 are compositionally biased toward acidic residues. A compositionally biased stretch (basic and acidic residues) spans Asp-183–Asp-195. The residue at position 774 (Ser-774) is a Phosphoserine. Composition is skewed to acidic residues over residues Ser-784 to Gly-793 and Glu-828 to Asp-838. Residues Ser-857, Ser-862, and Ser-892 each carry the phosphoserine modification. Over residues Asp-858 to Gly-879 the composition is skewed to basic and acidic residues. Residues Ser-909–Phe-924 show a composition bias toward polar residues. Acidic residues predominate over residues Gly-932–Asp-944. Phosphothreonine is present on Thr-990. Ser-991 is subject to Phosphoserine. A compositionally biased stretch (acidic residues) spans Ile-1000–Asn-1018.

It belongs to the SAPS family. As to quaternary structure, associates with the SIT4 protein phosphatase catalytic subunit in a cell-cycle-dependent manner. Hyperphosphorylated in the absence of SIT4.

The protein localises to the cytoplasm. Positive regulator of protein phosphatase SIT4. Involved in the general amino acid control (GAAC) response regulated by TOR. Involved in the dephosphorylation of the elongator complex subunit IKI3. The sequence is that of SIT4-associating protein SAP190 (SAP190) from Saccharomyces cerevisiae (strain AWRI1631) (Baker's yeast).